Consider the following 200-residue polypeptide: Charged multivesicular body protein 6 (200 aa).

Residue Gly2 is the site of N-myristoyl glycine attachment. The stretch at 10–94 (RSRVTEQDKA…ERMVQDIEFT (85 aa)) forms a coiled coil. The Type-2 MIT-interacting motif motif lies at 168–179 (LELPDVPSEPLP). A disordered region spans residues 169–200 (ELPDVPSEPLPEEPPEATPVKNRPKPELVAAS).

The protein belongs to the SNF7 family. As to quaternary structure, probable core component of the endosomal sorting required for transport complex III (ESCRT-III). ESCRT-III components are thought to multimerize to form a flat lattice on the perimeter membrane of the endosome.

Its subcellular location is the endomembrane system. It is found in the late endosome membrane. Probable core component of the endosomal sorting required for transport complex III (ESCRT-III) which is involved in multivesicular bodies (MVBs) formation and sorting of endosomal cargo proteins into MVBs. MVBs contain intraluminal vesicles (ILVs) that are generated by invagination and scission from the limiting membrane of the endosome and mostly are delivered to lysosomes enabling degradation of membrane proteins, such as stimulated growth factor receptors, lysosomal enzymes and lipids. In the ESCRT-III complex, it probably serves as an acceptor for the ESCRT-II complex on endosomal membranes. The sequence is that of Charged multivesicular body protein 6 (CHMP6) from Gallus gallus (Chicken).